The primary structure comprises 631 residues: Hepatocyte nuclear factor 1-alpha (631 aa).

The dimerization stretch occupies residues 1-31 (MVSKLSQLQTELLAALLESGLSKEALIQALG). The 32-residue stretch at 1-32 (MVSKLSQLQTELLAALLESGLSKEALIQALGE) folds into the HNF-p1 domain. Residues 40–81 (GEGPLDKGESCGGGRGELAELPNGLGETRGSEDETDDDGEDF) form a disordered region. A Phosphoserine modification is found at serine 70. Phosphothreonine is present on threonine 74. The POU-specific atypical domain maps to 87–182 (KELENLSPEE…VAQQFTHAGQ (96 aa)). Serine 93 is subject to Phosphoserine. A Glycyl lysine isopeptide (Lys-Gly) (interchain with G-Cter in ubiquitin) cross-link involves residue lysine 117. Interaction with DNA stretches follow at residues 130–132 (QRE), 143–149 (HLSQHLN), 155–158 (KTQK), and 203–206 (RFKW). A disordered region spans residues 183 to 205 (GGLIEEPTGDELPTKKGRRNRFK). Positions 197 to 205 (KKGRRNRFK) match the Nuclear localization signal motif. A DNA-binding region (homeobox; HNF1-type) is located at residues 199–279 (GRRNRFKWGP…NRRKEEAFRH (81 aa)). A Phosphoserine modification is found at serine 247. Interaction with DNA regions lie at residues 263–265 (RVY) and 270–273 (NRRK). Disordered regions lie at residues 283 to 358 (MDTY…GLEP) and 545 to 567 (SDTE…TLHV). Residues 288–298 (GPPPGPGPGPA) are compositionally biased toward pro residues. The residue at position 313 (serine 313) is a Phosphoserine. Residues 325 to 353 (PATSETAEVPSSSGGPLVTVSTPLHQVSP) are compositionally biased toward polar residues.

It belongs to the HNF1 homeobox family. Binds DNA as a dimer. Heterotetramer with PCBD1; formed by a dimer of dimers. Interacts with PCBD1. Interacts with BHLHE41. Interacts with NR5A2. Interacts with SPOP; this interaction promotes ubiquitination and degradation of HNF1A. In terms of processing, ubiquitinated in s SPOP-dependent manner; leading to prteasomal degradation. As to expression, liver.

The protein resides in the nucleus. Functionally, transcriptional activator that regulates the tissue specific expression of multiple genes, especially in pancreatic islet cells and in liver. Binds to the inverted palindrome 5'-GTTAATNATTAAC-3'. Activates the transcription of CYP1A2, CYP2E1 and CYP3A11. (Microbial infection) Plays a crucial role for hepatitis B virus gene transcription and DNA replication. Mechanistically, synergistically cooperates with NR5A2 to up-regulate the activity of one of the critical cis-elements in the hepatitis B virus genome enhancer II (ENII). The polypeptide is Hepatocyte nuclear factor 1-alpha (HNF1A) (Homo sapiens (Human)).